The chain runs to 451 residues: UDP-N-acetylmuramate--L-alanine ligase (451 aa).

Residue 110 to 116 participates in ATP binding; it reads GTHGKTT.

This sequence belongs to the MurCDEF family.

The protein resides in the cytoplasm. It catalyses the reaction UDP-N-acetyl-alpha-D-muramate + L-alanine + ATP = UDP-N-acetyl-alpha-D-muramoyl-L-alanine + ADP + phosphate + H(+). It functions in the pathway cell wall biogenesis; peptidoglycan biosynthesis. In terms of biological role, cell wall formation. The sequence is that of UDP-N-acetylmuramate--L-alanine ligase from Francisella tularensis subsp. holarctica (strain FTNF002-00 / FTA).